The chain runs to 490 residues: Betaine aldehyde dehydrogenase (490 aa).

The K(+) site is built by Thr-26, Ile-27, and Asp-93. Residue 150–152 (GAW) coordinates NAD(+). Catalysis depends on Lys-162, which acts as the Charge relay system. An NAD(+)-binding site is contributed by 176–179 (KPSE). A K(+)-binding site is contributed by Val-180. 230 to 233 (GVAS) contributes to the NAD(+) binding site. Leu-246 is a binding site for K(+). Glu-252 acts as the Proton acceptor in catalysis. Residues Gly-254, Cys-286, and Glu-387 each contribute to the NAD(+) site. Cys-286 (nucleophile) is an active-site residue. The residue at position 286 (Cys-286) is a Cysteine sulfenic acid (-SOH). Positions 457 and 460 each coordinate K(+). Glu-464 (charge relay system) is an active-site residue.

It belongs to the aldehyde dehydrogenase family. Dimer of dimers. Requires K(+) as cofactor.

The catalysed reaction is betaine aldehyde + NAD(+) + H2O = glycine betaine + NADH + 2 H(+). The protein operates within amine and polyamine biosynthesis; betaine biosynthesis via choline pathway; betaine from betaine aldehyde: step 1/1. Its function is as follows. Involved in the biosynthesis of the osmoprotectant glycine betaine. Catalyzes the irreversible oxidation of betaine aldehyde to the corresponding acid. This Escherichia coli O6:H1 (strain CFT073 / ATCC 700928 / UPEC) protein is Betaine aldehyde dehydrogenase.